The following is an 88-amino-acid chain: Small ribosomal subunit protein bS16c (88 aa).

This sequence belongs to the bacterial ribosomal protein bS16 family.

The protein localises to the plastid. The protein resides in the chloroplast. The sequence is that of Small ribosomal subunit protein bS16c from Helianthus annuus (Common sunflower).